The chain runs to 178 residues: Putative adenylate kinase (178 aa).

5 residues coordinate ATP: glycine 10, glycine 12, lysine 13, serine 14, and serine 15. The interval 29–50 (TVVELAEKHGCIIDEEDGEIVI) is NMP. The LID stretch occupies residues 94–104 (GRNWSEEKLLE). Arginine 95 provides a ligand contact to ATP.

It belongs to the adenylate kinase family. AK6 subfamily. As to quaternary structure, interacts with uS11. Not a structural component of 40S pre-ribosomes, but transiently interacts with them by binding to uS11.

It carries out the reaction AMP + ATP = 2 ADP. The enzyme catalyses ATP + H2O = ADP + phosphate + H(+). Broad-specificity nucleoside monophosphate (NMP) kinase that catalyzes the reversible transfer of the terminal phosphate group between nucleoside triphosphates and monophosphates. Also has ATPase activity. Involved in the late maturation steps of the 30S ribosomal particles, specifically 16S rRNA maturation. While NMP activity is not required for ribosome maturation, ATPase activity is. Associates transiently with small ribosomal subunit protein uS11. ATP hydrolysis breaks the interaction with uS11. May temporarily remove uS11 from the ribosome to enable a conformational change of the ribosomal RNA that is needed for the final maturation step of the small ribosomal subunit. The chain is Putative adenylate kinase from Archaeoglobus fulgidus (strain ATCC 49558 / DSM 4304 / JCM 9628 / NBRC 100126 / VC-16).